The chain runs to 174 residues: Crossover junction endodeoxyribonuclease RuvC (174 aa).

Residues Asp8, Glu68, and Asp140 contribute to the active site. Residues Asp8, Glu68, and Asp140 each coordinate Mg(2+).

The protein belongs to the RuvC family. Homodimer which binds Holliday junction (HJ) DNA. The HJ becomes 2-fold symmetrical on binding to RuvC with unstacked arms; it has a different conformation from HJ DNA in complex with RuvA. In the full resolvosome a probable DNA-RuvA(4)-RuvB(12)-RuvC(2) complex forms which resolves the HJ. Requires Mg(2+) as cofactor.

Its subcellular location is the cytoplasm. It carries out the reaction Endonucleolytic cleavage at a junction such as a reciprocal single-stranded crossover between two homologous DNA duplexes (Holliday junction).. Functionally, the RuvA-RuvB-RuvC complex processes Holliday junction (HJ) DNA during genetic recombination and DNA repair. Endonuclease that resolves HJ intermediates. Cleaves cruciform DNA by making single-stranded nicks across the HJ at symmetrical positions within the homologous arms, yielding a 5'-phosphate and a 3'-hydroxyl group; requires a central core of homology in the junction. The consensus cleavage sequence is 5'-(A/T)TT(C/G)-3'. Cleavage occurs on the 3'-side of the TT dinucleotide at the point of strand exchange. HJ branch migration catalyzed by RuvA-RuvB allows RuvC to scan DNA until it finds its consensus sequence, where it cleaves and resolves the cruciform DNA. The chain is Crossover junction endodeoxyribonuclease RuvC from Legionella pneumophila subsp. pneumophila (strain Philadelphia 1 / ATCC 33152 / DSM 7513).